The primary structure comprises 351 residues: Cell cycle control protein 50B (351 aa).

At 1–33 (MTWSATARGAHQPDNTAFTQQRLPAWQPLLSAS) the chain is on the cytoplasmic side. The helical transmembrane segment at 34 to 54 (IALPLFFCAGLAFIGLGLGLY) threads the bilayer. Residues 55 to 315 (YSSNGIKELE…SISWMGGKNP (261 aa)) are Exoplasmic loop-facing. 3 N-linked (GlcNAc...) asparagine glycosylation sites follow: Asn-75, Asn-213, and Asn-286. The chain crosses the membrane as a helical span at residues 316-336 (FLGIAYLVVGSLCILTGFVML). Topologically, residues 337–351 (VVYIRYQDQDDDDEE) are cytoplasmic.

It belongs to the CDC50/LEM3 family. As to quaternary structure, component of a P4-ATPase flippase complex which consists of a catalytic alpha subunit and an accessory beta subunit. Interacts with alpha subunits ATP8A1, ATP8B1, ATP8B2 and ATP8B4.

The protein resides in the cell membrane. Accessory component of a P4-ATPase flippase complex which catalyzes the hydrolysis of ATP coupled to the transport of aminophospholipids from the outer to the inner leaflet of various membranes and ensures the maintenance of asymmetric distribution of phospholipids. Phospholipid translocation also seems to be implicated in vesicle formation and in uptake of lipid signaling molecules. The beta subunit may assist in binding of the phospholipid substrate. Can mediate the export of alpha subunits ATP8A1, ATP8B1, ATP8B2 and ATP8B4 from the ER to the plasma membrane. The polypeptide is Cell cycle control protein 50B (TMEM30B) (Homo sapiens (Human)).